Reading from the N-terminus, the 128-residue chain is Small ribosomal subunit protein uS9 (128 aa).

Residues 107 to 128 (RAVERKKPGRPKARKRFQFSKR) are disordered. A compositionally biased stretch (basic residues) spans 113-128 (KPGRPKARKRFQFSKR).

It belongs to the universal ribosomal protein uS9 family.

This Parabacteroides distasonis (strain ATCC 8503 / DSM 20701 / CIP 104284 / JCM 5825 / NCTC 11152) protein is Small ribosomal subunit protein uS9.